Consider the following 263-residue polypeptide: Small ribosomal subunit protein eS4 (263 aa).

Residues 42–104 (LPLIIFLRNR…TGENFRLIYD (63 aa)) form the S4 RNA-binding domain.

Belongs to the eukaryotic ribosomal protein eS4 family.

The protein is Small ribosomal subunit protein eS4 (RPS4) of Cricetulus griseus (Chinese hamster).